The chain runs to 345 residues: Aurora kinase B (345 aa).

The disordered stretch occupies residues 1–25 (MAQKENAYPWPYGSKTSQSGLNTLS). Residues 14–25 (SKTSQSGLNTLS) are compositionally biased toward polar residues. Position 35 is a phosphothreonine (threonine 35). The disordered stretch occupies residues 50-77 (TAAPGQKLAENKSQGSTASQGSQNKQPF). Residues 60-77 (NKSQGSTASQGSQNKQPF) show a composition bias toward polar residues. Serine 62 is subject to Phosphoserine. Residues 82–332 (FEIGRPLGKG…LAEVAAHPWV (251 aa)) form the Protein kinase domain. ATP is bound by residues 88-96 (LGKGKFGNV) and lysine 111. Aspartate 205 acts as the Proton acceptor in catalysis. Lysine 220 carries the N6-acetyllysine modification. The residue at position 232 (serine 232) is a Phosphoserine. Position 237 is a phosphothreonine; by autocatalysis (threonine 237).

Belongs to the protein kinase superfamily. Ser/Thr protein kinase family. Aurora subfamily. Component of the chromosomal passenger complex (CPC) composed of at least BIRC5/survivin, CDCA8/borealin, INCENP, AURKB or AURKC; predominantly independent AURKB- and AURKC-containing complexes exist. Associates with RACGAP1 during M phase. Interacts with SPDYC; this interaction may be required for proper localization of active, Thr-237-phosphorylated AURKB form during prometaphase and metaphase. Interacts with p53/TP53. Interacts (via the middle kinase domain) with NOC2L (via the N- and C-terminus domains). Interacts with CDCA1. Interacts with EVI5. Interacts with JTB. Interacts with NDC80. Interacts with PSMA3. Interacts with RNF2/RING1B. Interacts with SEPTIN1. Interacts with SIRT2. Interacts with TACC1. Interacts with TTC28. In terms of processing, the phosphorylation of Thr-237 requires the binding to INCENP and occurs by means of an autophosphorylation mechanism. Thr-237 phosphorylation is indispensable for the AURKB kinase activity. Post-translationally, acetylated at Lys-220 by KAT5 at kinetochores, increasing AURKB activity and promoting accurate chromosome segregation in mitosis. Ubiquitinated by different BCR (BTB-CUL3-RBX1) E3 ubiquitin ligase complexes. Ubiquitinated by the BCR(KLHL9-KLHL13) E3 ubiquitin ligase complex, ubiquitination leads to removal from mitotic chromosomes and is required for cytokinesis. During anaphase, the BCR(KLHL21) E3 ubiquitin ligase complex recruits the CPC complex from chromosomes to the spindle midzone and mediates the ubiquitination of AURKB. Ubiquitination of AURKB by BCR(KLHL21) E3 ubiquitin ligase complex may not lead to its degradation by the proteasome. Deubiquitinated by USP35; inhibiting CDH1-mediated degradation of AURKB. In terms of tissue distribution, expressed in testis, intestine and spleen. All of them are tissues that contain a large number of proliferating cells. Expressed during S phase, in a cell-cycle-dependent fashion.

The protein localises to the nucleus. Its subcellular location is the chromosome. It localises to the centromere. It is found in the kinetochore. The protein resides in the cytoplasm. The protein localises to the cytoskeleton. Its subcellular location is the spindle. It localises to the midbody. It carries out the reaction L-seryl-[protein] + ATP = O-phospho-L-seryl-[protein] + ADP + H(+). It catalyses the reaction L-threonyl-[protein] + ATP = O-phospho-L-threonyl-[protein] + ADP + H(+). Activity is greatly increased when AURKB is within the CPC complex. In particular, AURKB-phosphorylated INCENP acts as an activator of AURKB. Positive feedback between HASPIN and AURKB contributes to CPC localization. Its function is as follows. Serine/threonine-protein kinase component of the chromosomal passenger complex (CPC), a complex that acts as a key regulator of mitosis. The CPC complex has essential functions at the centromere in ensuring correct chromosome alignment and segregation and is required for chromatin-induced microtubule stabilization and spindle assembly. Involved in the bipolar attachment of spindle microtubules to kinetochores and is a key regulator for the onset of cytokinesis during mitosis. Required for central/midzone spindle assembly and cleavage furrow formation. Key component of the cytokinesis checkpoint, a process required to delay abscission to prevent both premature resolution of intercellular chromosome bridges and accumulation of DNA damage: phosphorylates CHMP4C, leading to retain abscission-competent VPS4 (VPS4A and/or VPS4B) at the midbody ring until abscission checkpoint signaling is terminated at late cytokinesis. AURKB phosphorylates the CPC complex subunits BIRC5/survivin, CDCA8/borealin and INCENP. Phosphorylation of INCENP leads to increased AURKB activity. Other known AURKB substrates involved in centromeric functions and mitosis are CENPA, DES/desmin, GPAF, KIF2C, NSUN2, RACGAP1, SEPTIN1, VIM/vimentin, HASPIN, and histone H3. A positive feedback loop involving HASPIN and AURKB contributes to localization of CPC to centromeres. Phosphorylation of VIM controls vimentin filament segregation in cytokinetic process, whereas histone H3 is phosphorylated at 'Ser-10' and 'Ser-28' during mitosis (H3S10ph and H3S28ph, respectively). AURKB is also required for kinetochore localization of BUB1 and SGO1. Phosphorylation of p53/TP53 negatively regulates its transcriptional activity. Key regulator of active promoters in resting B- and T-lymphocytes: acts by mediating phosphorylation of H3S28ph at active promoters in resting B-cells, inhibiting RNF2/RING1B-mediated ubiquitination of histone H2A and enhancing binding and activity of the USP16 deubiquitinase at transcribed genes. Acts as an inhibitor of CGAS during mitosis: catalyzes phosphorylation of the N-terminus of CGAS during the G2-M transition, blocking CGAS liquid phase separation and activation, and thereby preventing CGAS-induced autoimmunity. Phosphorylates KRT5 during anaphase and telophase. Phosphorylates ATXN10 which promotes phosphorylation of ATXN10 by PLK1 and may play a role in the regulation of cytokinesis and stimulating the proteasomal degradation of ATXN10. The polypeptide is Aurora kinase B (Aurkb) (Mus musculus (Mouse)).